A 392-amino-acid chain; its full sequence is Putative nicotinate phosphoribosyltransferase (392 aa).

Residues Y21, F138, and T179 each coordinate nicotinate. H182 carries the phosphohistidine modification. R235 is a binding site for nicotinate. Positions 240, 272, and 293 each coordinate 5-phospho-alpha-D-ribose 1-diphosphate. Positions 330, 333, 348, and 350 each coordinate Zn(2+).

The protein belongs to the NAPRTase family. Highly divergent. As to quaternary structure, homodimer. Forms a trimer of dimers in the crystal. In terms of processing, transiently phosphorylated on a His residue during the reaction cycle. Phosphorylation strongly increases the affinity for substrates and increases the rate of nicotinate D-ribonucleotide production. Dephosphorylation regenerates the low-affinity form of the enzyme, leading to product release.

The catalysed reaction is nicotinate + 5-phospho-alpha-D-ribose 1-diphosphate + ATP + H2O = nicotinate beta-D-ribonucleotide + ADP + phosphate + diphosphate. Its pathway is cofactor biosynthesis; NAD(+) biosynthesis; nicotinate D-ribonucleotide from nicotinate: step 1/1. Catalyzes the synthesis of beta-nicotinate D-ribonucleotide from nicotinate and 5-phospho-D-ribose 1-phosphate at the expense of ATP. This chain is Putative nicotinate phosphoribosyltransferase, found in Thermoplasma acidophilum (strain ATCC 25905 / DSM 1728 / JCM 9062 / NBRC 15155 / AMRC-C165).